A 1214-amino-acid polypeptide reads, in one-letter code: Lysine-specific demethylase 3A (1214 aa).

Phosphoserine occurs at positions 150 and 209. The span at 194 to 211 shows a compositional bias: polar residues; it reads TPSSNRQQNTPQAANSPP. Disordered regions lie at residues 194 to 215, 271 to 293, and 310 to 398; these read TPSS…NIGA, PKGS…STPQ, and KAEL…KSVL. Ser-330 carries the phosphoserine modification. Polar residues predominate over residues 361 to 370; that stretch reads LGSQSQNLKE. Residues 371–380 are compositionally biased toward basic and acidic residues; it reads TSVKVDHDSC. The segment covering 381 to 391 has biased composition (polar residues); the sequence is CTRSSNKTQTP. The C6-type zinc-finger motif lies at 546–571; it reads CDVCDTTIFNLHWVCPRCGFGVCVDC. An LXXLL motif motif is present at residues 769 to 773; the sequence is LRNLL. Lys-779 is modified (N6-acetyllysine). Residues 944 to 1167 enclose the JmjC domain; sequence MPSRFDDLMA…HCFWLTQEFR (224 aa). 3 residues coordinate Fe cation: His-1006, Asp-1008, and His-1135.

Belongs to the JHDM2 histone demethylase family. As to quaternary structure, interacts with VRK1. It depends on Fe(2+) as a cofactor. As to expression, testis specific. Expressed only in male germ cells.

Its subcellular location is the cytoplasm. It is found in the nucleus. The enzyme catalyses N(6),N(6)-dimethyl-L-lysyl(9)-[histone H3] + 2 2-oxoglutarate + 2 O2 = L-lysyl(9)-[histone H3] + 2 formaldehyde + 2 succinate + 2 CO2. In terms of biological role, histone demethylase that specifically demethylates 'Lys-9' of histone H3, thereby playing a central role in histone code. Preferentially demethylates mono- and dimethylated H3 'Lys-9' residue, with a preference for dimethylated residue, while it has weak or no activity on trimethylated H3 'Lys-9'. Demethylation of Lys residue generates formaldehyde and succinate. Involved in hormone-dependent transcriptional activation, by participating in recruitment to androgen-receptor target genes, resulting in H3 'Lys-9' demethylation and transcriptional activation. Involved in spermatogenesis by regulating expression of target genes such as PRM1 and TNP1 which are required for packaging and condensation of sperm chromatin. Directly regulates expression of PPARA and UCP1 and is involved in obesity resistance. The chain is Lysine-specific demethylase 3A (Kdm3a) from Rattus norvegicus (Rat).